A 982-amino-acid polypeptide reads, in one-letter code: MDEEESTERQMQIAMLCQKLAMMKQLFNEDDTDYINQAISSNSPDTCRTFLSNLEKKGNPQADPSLLSKLMDSYTRVFSSMPLGKYSQNESYAKMLVRFAELKAIQDVNDAQTSFDIARSHCKDFAFVHVAYAQFELLQGNMKKCTMILQKAFEMNAKPRHVLEAAVRNLKTGKRQLLSHEDKENLSVSALDHTQGSRRSDGTCELKPSNTFLHSDQKFSPQEENGPVWRTGSQHRRTAMAERVPMVPLSIPENETSDSDCAQKAEAPFTHSSGFSRQTSGSSVRSAFSLCSSKKGTPDGDSYSLNIKPPVISPDYLREDIEEGHTITALLNRAEKRETARTEETTDINQIISTNSTEGCQAFLKNLEKRADPHSDAAFLSKLLDCYSKVFARFPLAEHCKTESYARMLVRYAELKGIEDPEDAADDFSIARSHCKAFAFVHIAHAQFELSRGNSRKSVSILQKALSSNARPIELLQTAIRNLKSGKTLLLPAEHQESSEAENVEAQNGMKREENPVKAPEDHQKPFSKETSSEWKIPALITKHTSPEDRKAPVEPVSSSSSHHAVRTPAPLRLNPSLSCQTPNYRQPNPNSFVTPVVKQRPVIVSVPATAQKMCPTALPCTPQSGVSYIQPPTQTPSSAFSNESITIKGKQFFIFKMIGRGGSSKVYQVFDHKKHVYAVKYVNLEEADAQAVESYKNEIEHLNHLQQYSDQIIKLYDYEITSSYIYMLMECGHLDLNTWLRNRKTVKPLDRKAYWRNMLEAVHTIHKHGIVHSDLKPANFLIVDGSLKLIDFGIANQIQPDVTSIMKDSQVGTLNYMPPEAIKDTSSNGKPGSKISAKGDVWSLGCILYCMTYGKTPFQNITNQISKIHAIIDPSHEIDFPDIPEKDLLDVLKKCLVRNPRERISIAELLDHPYLQLQPQPAPEPAETSSSDFKRILNELVALQSPNSIARAASNLAMMCNSGRKLDVSECVKSSSQTLWK.

3 disordered regions span residues 178–204 (LSHE…DGTC), 211–230 (TFLH…PVWR), and 493–574 (AEHQ…PLRL). A compositionally biased stretch (polar residues) spans 211–223 (TFLHSDQKFSPQE). Positions 510–533 (MKREENPVKAPEDHQKPFSKETSS) are enriched in basic and acidic residues. One can recognise a Protein kinase domain in the interval 653 to 916 (FFIFKMIGRG…IAELLDHPYL (264 aa)). Residues 659–667 (IGRGGSSKV) and lysine 681 each bind ATP. Aspartate 775 acts as the Proton acceptor in catalysis.

This sequence belongs to the protein kinase superfamily. Ser/Thr protein kinase family. Requires Mg(2+) as cofactor. Barely detectable in adult somatic tissues. Expressed in immature germ cells that have not completed meiosis. In ovary, expressed predominantly in previtellogenic oocytes. In testis, expressed in primary and secondary spermatocytes, but not mature spermatozoa.

It carries out the reaction L-seryl-[protein] + ATP = O-phospho-L-seryl-[protein] + ADP + H(+). The catalysed reaction is L-threonyl-[protein] + ATP = O-phospho-L-threonyl-[protein] + ADP + H(+). It catalyses the reaction L-tyrosyl-[protein] + ATP = O-phospho-L-tyrosyl-[protein] + ADP + H(+). In terms of biological role, involved in mitotic spindle assembly checkpoint signaling, a process that delays anaphase until chromosomes are bioriented on the spindle, and in the repair of incorrect mitotic kinetochore-spindle microtubule attachments. Required to prevent chromosome segregation errors during meiosis. Required for fin and heart regeneration. The polypeptide is Dual specificity protein kinase Ttk (ttk) (Danio rerio (Zebrafish)).